Here is a 365-residue protein sequence, read N- to C-terminus: Probable secreted beta-glucosidase UTH1 (365 aa).

Residues 1–17 (MKLSALLALSASTAVLA) form the signal peptide.

Belongs to the SUN family.

The protein localises to the mitochondrion outer membrane. It localises to the secreted. Its subcellular location is the cell wall. Its function is as follows. Involved in aging, oxidative stress response, and in the regulation of mitochondrial biogenesis. Inactivation of UTH1 increases life span, leads to higher resistance to heat stress and against hydrogen peroxide, and increases sensitivity to the superoxide radical-generating drug paraquat and to copper. Also required for the selective autophagic degradation of mitochondria (mitophagy) in response to nitrogen starvation. Involved in the remodeling of the cell wall during the various phases of yeast culture development and under various environmental conditions and plays a role in septation. Involved in cell sensitivity to boric acid. The protein is Probable secreted beta-glucosidase UTH1 (UTH1) of Saccharomyces cerevisiae (strain ATCC 204508 / S288c) (Baker's yeast).